A 560-amino-acid polypeptide reads, in one-letter code: uncharacterized protein (560 aa).

The zn(2)-C6 fungal-type DNA-binding region spans 18–44 (CLRCRRRKVKCDRQYPCSRCKESEESC). Residues 60 to 80 (LSRPITRETDSSAHQETRTRL) form a disordered region. The span at 64–80 (ITRETDSSAHQETRTRL) shows a compositional bias: basic and acidic residues. Residues 182–202 (FATSIILIVTAIAVALSLESF) form a helical membrane-spanning segment.

Its subcellular location is the nucleus membrane. This is an uncharacterized protein from Schizosaccharomyces pombe (strain 972 / ATCC 24843) (Fission yeast).